A 151-amino-acid polypeptide reads, in one-letter code: Nucleoside diphosphate kinase (151 aa).

ATP-binding residues include Lys-11, Phe-59, Arg-87, Thr-93, Arg-104, and Asn-114. The active-site Pros-phosphohistidine intermediate is the His-117.

The protein belongs to the NDK family. As to quaternary structure, homohexamer. The cofactor is Mg(2+).

The enzyme catalyses a 2'-deoxyribonucleoside 5'-diphosphate + ATP = a 2'-deoxyribonucleoside 5'-triphosphate + ADP. The catalysed reaction is a ribonucleoside 5'-diphosphate + ATP = a ribonucleoside 5'-triphosphate + ADP. Its function is as follows. Major role in the synthesis of nucleoside triphosphates other than ATP. The ATP gamma phosphate is transferred to the NDP beta phosphate via a ping-pong mechanism, using a phosphorylated active-site intermediate. In Ginglymostoma cirratum (Nurse shark), this protein is Nucleoside diphosphate kinase.